The primary structure comprises 344 residues: Protein RecA (344 aa).

66–73 provides a ligand contact to ATP; it reads GPESSGKT.

The protein belongs to the RecA family.

It localises to the cytoplasm. Functionally, can catalyze the hydrolysis of ATP in the presence of single-stranded DNA, the ATP-dependent uptake of single-stranded DNA by duplex DNA, and the ATP-dependent hybridization of homologous single-stranded DNAs. It interacts with LexA causing its activation and leading to its autocatalytic cleavage. This chain is Protein RecA, found in Methylobacillus flagellatus (strain ATCC 51484 / DSM 6875 / VKM B-1610 / KT).